Reading from the N-terminus, the 310-residue chain is Olfactory receptor 1496 (310 aa).

Residues 1–23 lie on the Extracellular side of the membrane; it reads MNNQTFITQFLLLGLPIPEEHQH. Asparagine 3 carries an N-linked (GlcNAc...) asparagine glycan. Residues 24 to 48 traverse the membrane as a helical segment; sequence LFYALFLVMYLTTILGNLLIIVLVQ. Over 49–55 the chain is Cytoplasmic; sequence LDSQLHT. The helical transmembrane segment at 56 to 77 threads the bilayer; that stretch reads PMYLFLSNLSFSDLCFSSVTMP. Residues 78 to 98 lie on the Extracellular side of the membrane; that stretch reads KLLQNMRSQDTSIPYGGCLAQ. A disulfide bond links cysteine 95 and cysteine 187. A helical membrane pass occupies residues 99–118; the sequence is TYFFMVFGDMESFLLVAMAY. Residues 119-137 lie on the Cytoplasmic side of the membrane; that stretch reads DRYVAICFPLHYTSIMSPK. A helical membrane pass occupies residues 138-156; the sequence is LCTCLVLLLWMLTTSHAMM. The Extracellular segment spans residues 157 to 194; sequence HTLLAARLSFCENNVVLNFFCDLFVLLKLACSDTYINE. A helical transmembrane segment spans residues 195–217; the sequence is LMIFIMSTLLIIIPFFLIVMSYA. Topologically, residues 218-234 are cytoplasmic; that stretch reads RIISSILKVPSTQGICK. Residues 235-258 traverse the membrane as a helical segment; sequence VFSTCGSHLSVVSLFYGTIIGLYL. The Extracellular portion of the chain corresponds to 259 to 270; it reads CPAGNNSTVKEM. The chain crosses the membrane as a helical span at residues 271–290; that stretch reads VMAMMYTVVTPMLNPFIYSL. The Cytoplasmic portion of the chain corresponds to 291–310; sequence RNRDMKRALIRVICSMKITL.

This sequence belongs to the G-protein coupled receptor 1 family. In terms of tissue distribution, olfactory epithelium.

Its subcellular location is the cell membrane. In terms of biological role, odorant receptor. This is Olfactory receptor 1496 (Olr1496) from Rattus norvegicus (Rat).